The sequence spans 111 residues: C-X-C motif chemokine 14 (111 aa).

The first 34 residues, 1–34 (MSLLPRRAPPVSMRLLAAALLLLLLALYTARVDG), serve as a signal peptide directing secretion. Disulfide bonds link Cys-37–Cys-63 and Cys-39–Cys-84. Residues 67 to 81 (MVIITTKSVSRYRGQ) carry the D-box motif.

This sequence belongs to the intercrine alpha (chemokine CxC) family. Post-translationally, ubiquitinated, followed by degradation by the proteasome. In terms of tissue distribution, expressed in heart, brain, placenta, lung, liver, skeletal muscle, kidney and pancreas. Highly expressed in normal tissue without inflammatory stimuli and infrequently expressed in cancer cell lines. Weakly expressed in monocyte-derived dendritic cells. Not detected in lung or unstimulated peripheral blood lymphocytes.

It is found in the secreted. In terms of biological role, potent chemoattractant for neutrophils, and weaker for dendritic cells. Not chemotactic for T-cells, B-cells, monocytes, natural killer cells or granulocytes. Does not inhibit proliferation of myeloid progenitors in colony formation assays. This Homo sapiens (Human) protein is C-X-C motif chemokine 14 (CXCL14).